Here is a 556-residue protein sequence, read N- to C-terminus: 2-succinyl-5-enolpyruvyl-6-hydroxy-3-cyclohexene-1-carboxylate synthase (556 aa).

This sequence belongs to the TPP enzyme family. MenD subfamily. Homodimer. The cofactor is Mg(2+). Mn(2+) serves as cofactor. Thiamine diphosphate is required as a cofactor.

It carries out the reaction isochorismate + 2-oxoglutarate + H(+) = 5-enolpyruvoyl-6-hydroxy-2-succinyl-cyclohex-3-ene-1-carboxylate + CO2. The protein operates within quinol/quinone metabolism; 1,4-dihydroxy-2-naphthoate biosynthesis; 1,4-dihydroxy-2-naphthoate from chorismate: step 2/7. Its pathway is quinol/quinone metabolism; menaquinone biosynthesis. Functionally, catalyzes the thiamine diphosphate-dependent decarboxylation of 2-oxoglutarate and the subsequent addition of the resulting succinic semialdehyde-thiamine pyrophosphate anion to isochorismate to yield 2-succinyl-5-enolpyruvyl-6-hydroxy-3-cyclohexene-1-carboxylate (SEPHCHC). The polypeptide is 2-succinyl-5-enolpyruvyl-6-hydroxy-3-cyclohexene-1-carboxylate synthase (Escherichia coli O7:K1 (strain IAI39 / ExPEC)).